We begin with the raw amino-acid sequence, 414 residues long: Serine hydroxymethyltransferase (414 aa).

Residues L121 and 125 to 127 (GHL) each bind (6S)-5,6,7,8-tetrahydrofolate. The residue at position 230 (K230) is an N6-(pyridoxal phosphate)lysine.

Belongs to the SHMT family. As to quaternary structure, homodimer. Pyridoxal 5'-phosphate serves as cofactor.

The protein resides in the cytoplasm. It carries out the reaction (6R)-5,10-methylene-5,6,7,8-tetrahydrofolate + glycine + H2O = (6S)-5,6,7,8-tetrahydrofolate + L-serine. The protein operates within one-carbon metabolism; tetrahydrofolate interconversion. Its pathway is amino-acid biosynthesis; glycine biosynthesis; glycine from L-serine: step 1/1. In terms of biological role, catalyzes the reversible interconversion of serine and glycine with tetrahydrofolate (THF) serving as the one-carbon carrier. This reaction serves as the major source of one-carbon groups required for the biosynthesis of purines, thymidylate, methionine, and other important biomolecules. Also exhibits THF-independent aldolase activity toward beta-hydroxyamino acids, producing glycine and aldehydes, via a retro-aldol mechanism. The protein is Serine hydroxymethyltransferase of Acidithiobacillus ferrooxidans (strain ATCC 23270 / DSM 14882 / CIP 104768 / NCIMB 8455) (Ferrobacillus ferrooxidans (strain ATCC 23270)).